A 520-amino-acid polypeptide reads, in one-letter code: GMP synthase [glutamine-hydrolyzing] (520 aa).

Residues 9–202 (KILILDFGSQ…VRQICGCTGQ (194 aa)) form the Glutamine amidotransferase type-1 domain. Catalysis depends on cysteine 86, which acts as the Nucleophile. Catalysis depends on residues histidine 176 and glutamate 178. Residues 203 to 395 (WTPGQIIEDA…LGLPHPMVYR (193 aa)) enclose the GMPS ATP-PPase domain. An ATP-binding site is contributed by 230–236 (SGGVDSS).

In terms of assembly, homodimer.

It carries out the reaction XMP + L-glutamine + ATP + H2O = GMP + L-glutamate + AMP + diphosphate + 2 H(+). It participates in purine metabolism; GMP biosynthesis; GMP from XMP (L-Gln route): step 1/1. Its function is as follows. Catalyzes the synthesis of GMP from XMP. The chain is GMP synthase [glutamine-hydrolyzing] from Syntrophotalea carbinolica (strain DSM 2380 / NBRC 103641 / GraBd1) (Pelobacter carbinolicus).